A 399-amino-acid polypeptide reads, in one-letter code: MSLQYGAEETPLAGSYGAADSFPKDFGYGVEEEEEEAAAAGGGVGAGAGGGCGPGGADSSKPRILLMGLRRSGKSSIQKVVFHKMSPNETLFLESTNKIYKDDISNSSFVNFQIWDFPGQMDFFDPTFDYEMIFRGTGALIYVIDAQDDYMEALTRLHITVSKAYKVNPDMNFEVFIHKVDGLSDDHKIETQRDIHQRANDDLADAGLEKLHLSFYLTSIYDHSIFEAFSKVVQKLIPQLPTLENLLNIFISNSGIEKAFLFDVVSKIYIATDSSPVDMQSYELCCDMIDVVIDVSCIYGLKEDGSGSAYDKESMAIIKLNNTTVLYLKEVTKFLALVCILREESFERKGLIDYNFHCFRKAIHEVFEVGVTSHRSCGHQTSASSLKALTHNGTPRNAI.

The disordered stretch occupies residues 1 to 20 (MSLQYGAEETPLAGSYGAAD). The residue at position 2 (Ser2) is an N-acetylserine. Phosphoserine occurs at positions 2 and 15. Positions 71, 72, 73, 74, 75, 76, 90, 94, 96, 178, 179, 181, 219, and 220 each coordinate GDP. Lys74 serves as a coordination point for GTP. GTP is bound at residue Thr90. Thr96 is a binding site for GTP. Thr96 bears the Phosphothreonine mark. Asp181 is a GTP binding site.

It belongs to the GTR/RAG GTP-binding protein family. In terms of assembly, forms a heterodimer with RRAGA, in a sequence-independent manner, and RRAGB. Heterodimerization stabilizes proteins of the heterodimer. The GDP-bound form of RRAGC (in complex with the GTP-bound form of RRAGA or RRAGB), interacts with RPTOR, thereby promoting recruitment of mTORC1 to the lysosomes. Component of the lysosomal folliculin complex (LFC), composed of FLCN, FNIP1 (or FNIP2), RagA/RRAGA or RagB/RRAGB GDP-bound, RagC/RRAGC or RagD/RRAGD GTP-bound, and Ragulator. Interacts with NOL8. Interacts with SH3BP4; the interaction with this negative regulator is most probably direct, preferentially occurs with the inactive GDP-bound form of RRAGB, is negatively regulated by amino acids and prevents interaction with RPTOR. The Rag heterodimer interacts with SLC38A9; the probable amino acid sensor. Interacts with SESN1, SESN2 and SESN3. Interacts with PIP4P1. The Rag heterodimer interacts with the Ragulator complex. The GDP-bound form interacts with TFEB. The GDP-bound form interacts with TFE3.

The protein resides in the cytoplasm. It localises to the nucleus. It is found in the lysosome membrane. The catalysed reaction is GTP + H2O = GDP + phosphate + H(+). With respect to regulation, the activation of RagC/RRAGC is mediated by a GTPase activating protein (GAP). In high-amino acid conditions, activated by GTPase activating protein FLCN that stimulates RRAGC GTPase activity to turn it into its active GDP-bound form. In response to amino acid depletion, the GATOR1 complex inactivates RagC/RRAGC by securing the GTP-bound inactive form. Guanine nucleotide-binding protein that plays a crucial role in the cellular response to amino acid availability through regulation of the mTORC1 signaling cascade. Forms heterodimeric Rag complexes with RagA/RRAGA or RagB/RRAGB and cycles between an inactive GTP-bound and an active GDP-bound form: RagC/RRAGC is in its active form when GDP-bound RagC/RRAGC forms a complex with GTP-bound RagA/RRAGA (or RagB/RRAGB) and in an inactive form when GTP-bound RagC/RRAGC heterodimerizes with GDP-bound RagA/RRAGA (or RagB/RRAGB). In its GDP-bound active form, promotes the recruitment of mTORC1 to the lysosomes and its subsequent activation by the GTPase RHEB. This is a crucial step in the activation of the MTOR signaling cascade by amino acids. Also plays a central role in the non-canonical mTORC1 complex, which acts independently of RHEB and specifically mediates phosphorylation of MiT/TFE factors TFEB and TFE3: GDP-bound RagC/RRAGC mediates recruitment of MiT/TFE factors TFEB and TFE3. This chain is Ras-related GTP-binding protein C, found in Homo sapiens (Human).